Consider the following 129-residue polypeptide: UPF0344 protein SAB0838 (129 aa).

The next 4 membrane-spanning stretches (helical) occupy residues 1–21 (MLHL…ATYL), 36–56 (LHMV…WILI), 67–87 (MLLT…EVSI), and 99–119 (MFWI…ILPL).

Belongs to the UPF0344 family.

The protein resides in the cell membrane. The sequence is that of UPF0344 protein SAB0838 from Staphylococcus aureus (strain bovine RF122 / ET3-1).